The primary structure comprises 323 residues: Acetyl esterase (323 aa).

Residues 91–93 (HGG) carry the Involved in the stabilization of the negatively charged intermediate by the formation of the oxyanion hole motif. Active-site residues include S165, D262, and H292.

This sequence belongs to the 'GDXG' lipolytic enzyme family. In terms of assembly, homodimer. Interacts with MalT and MelA.

Its subcellular location is the cytoplasm. Displays esterase activity towards short chain fatty esters (acyl chain length of up to 8 carbons). Able to hydrolyze triacetylglycerol (triacetin) and tributyrylglycerol (tributyrin), but not trioleylglycerol (triolein) or cholesterol oleate. Negatively regulates MalT activity by antagonizing maltotriose binding. Inhibits MelA galactosidase activity. This chain is Acetyl esterase, found in Salmonella paratyphi A (strain ATCC 9150 / SARB42).